The sequence spans 339 residues: tRNA dimethylallyltransferase (339 aa).

33–40 (GPTASGKT) lines the ATP pocket. 35–40 (TASGKT) is a substrate binding site. 2 interaction with substrate tRNA regions span residues 58–61 (DSLL) and 182–186 (QRIQR).

It belongs to the IPP transferase family. As to quaternary structure, monomer. It depends on Mg(2+) as a cofactor.

It catalyses the reaction adenosine(37) in tRNA + dimethylallyl diphosphate = N(6)-dimethylallyladenosine(37) in tRNA + diphosphate. In terms of biological role, catalyzes the transfer of a dimethylallyl group onto the adenine at position 37 in tRNAs that read codons beginning with uridine, leading to the formation of N6-(dimethylallyl)adenosine (i(6)A). In Acidithiobacillus ferrooxidans (strain ATCC 23270 / DSM 14882 / CIP 104768 / NCIMB 8455) (Ferrobacillus ferrooxidans (strain ATCC 23270)), this protein is tRNA dimethylallyltransferase.